A 549-amino-acid chain; its full sequence is Zinc finger protein 266 (549 aa).

The KRAB domain maps to 1–42; it reads MLENYKNLATVGYQLFKPSLISWLEQEESRTVQRGDFQASEW. Residues 156–178 form a C2H2-type 1; degenerate zinc finger; that stretch reads FDCSDSGKSFINHSHLQGHLRTH. The segment at 184–206 adopts a C2H2-type 2; degenerate zinc-finger fold; it reads HEWKECGRGFIHSTDLAVRIQTH. 12 consecutive C2H2-type zinc fingers follow at residues 212-234, 240-262, 268-290, 296-318, 324-346, 352-374, 380-402, 408-430, 436-458, 464-486, 492-514, and 520-542; these read YKCKECGKGFRYSAYLNIHMGTH, YECKECGKAFTRSCQLTQHRKTH, YKCKDCGRAFTVSSCLSQHMKIH, YECKECGIAFTRSSQLTEHLKTH, FECKICGKSFRNSSCLSDHFRIH, YKCKDCGKAFTQNSDLTKHARTH, YECKECGKAFARSSRLSEHTRTH, FECVKCGKAFAISSNLSGHLRIH, FECLECGKAFTHSSSLNNHMRTH, FTCMECGKAFKFPTCVNLHMRIH, YKCKQCGKSFSYSNSFQLHERTH, and YECKECGKAFSSSSSFRNHERRH. A disordered region spans residues 530 to 549; the sequence is SSSSSFRNHERRHADERLSA.

This sequence belongs to the krueppel C2H2-type zinc-finger protein family.

The protein resides in the nucleus. Its function is as follows. May be involved in transcriptional regulation. The sequence is that of Zinc finger protein 266 (ZNF266) from Homo sapiens (Human).